Here is a 734-residue protein sequence, read N- to C-terminus: Photosystem I P700 chlorophyll a apoprotein A2 (734 aa).

A run of 8 helical transmembrane segments spans residues 46–69 (IFAS…FHVA), 135–158 (LYAG…LHLQ), 175–199 (LNHH…HVAI), 273–291 (IAHH…GHMY), 330–353 (LHFQ…QHLY), 369–395 (AALY…IFFV), 417–439 (AIIS…LYVH), and 517–535 (FLVH…LILV). Residues Cys559 and Cys568 each coordinate [4Fe-4S] cluster. The next 2 membrane-spanning stretches (helical) occupy residues 575 to 596 (AFYL…YWHW) and 643 to 665 (LSVW…MFLI). His654, Met662, and Tyr670 together coordinate chlorophyll a. Phylloquinone is bound at residue Trp671. Residues 707–727 (LVGLVHFSVGYVLTYAAFVIA) traverse the membrane as a helical segment.

The protein belongs to the PsaA/PsaB family. As to quaternary structure, the PsaA/B heterodimer binds the P700 chlorophyll special pair and subsequent electron acceptors. PSI consists of a core antenna complex that captures photons, and an electron transfer chain that converts photonic excitation into a charge separation. The eukaryotic PSI reaction center is composed of at least 11 subunits. P700 is a chlorophyll a/chlorophyll a' dimer, A0 is one or more chlorophyll a, A1 is one or both phylloquinones and FX is a shared 4Fe-4S iron-sulfur center. serves as cofactor.

The protein localises to the plastid. It is found in the chloroplast thylakoid membrane. It carries out the reaction reduced [plastocyanin] + hnu + oxidized [2Fe-2S]-[ferredoxin] = oxidized [plastocyanin] + reduced [2Fe-2S]-[ferredoxin]. Functionally, psaA and PsaB bind P700, the primary electron donor of photosystem I (PSI), as well as the electron acceptors A0, A1 and FX. PSI is a plastocyanin/cytochrome c6-ferredoxin oxidoreductase, converting photonic excitation into a charge separation, which transfers an electron from the donor P700 chlorophyll pair to the spectroscopically characterized acceptors A0, A1, FX, FA and FB in turn. Oxidized P700 is reduced on the lumenal side of the thylakoid membrane by plastocyanin or cytochrome c6. The chain is Photosystem I P700 chlorophyll a apoprotein A2 from Cyanidium caldarium (Red alga).